A 418-amino-acid polypeptide reads, in one-letter code: Putative O-antigen transporter (418 aa).

11 helical membrane passes run 8 to 28 (VWNL…LGFL), 37 to 57 (FGVY…DVGL), 85 to 105 (FLVL…DGIV), 124 to 144 (LLAI…ILEG), 165 to 185 (IPAI…GLIF), 217 to 237 (LFFF…MVYF), 251 to 271 (VAFY…PAAI), 297 to 317 (LLMF…SGLV), 334 to 354 (LNVL…FSAI), 362 to 382 (ITAL…YFMV), and 385 to 405 (YGLL…ALLL).

It belongs to the polysaccharide synthase family.

It localises to the cell inner membrane. Its pathway is bacterial outer membrane biogenesis; lipopolysaccharide biosynthesis. Functionally, could be an O-antigen transporter. This is Putative O-antigen transporter (rfbE) from Shigella flexneri.